Consider the following 273-residue polypeptide: MTRLASRFGAANLIRRDRPLTREELFRVVPSVFSEDKHESRSERYTYIPTISLLDSLQREGFQPFFACQTRVRDPRRREHTKHMLRLRREGQITGKQVPEIILLNSHDGTSSYQMLPGMFRAVCQNGLVCGESFGEVRVPHKGDVVSQVIEGAYEVLGIFERVEEKRDAMQSLLLPPPVQQALAKAALTYRFGEDHQPVTESQILSPRRWQDESNDLWTTYQRIQENLIKGGLSGRNAKGGRTHTRAVRGIDGDVKLNRALWVMAETLLTQLQ.

Belongs to the UPF0380 family.

The sequence is that of UPF0380 protein YfjQ (yfjQ) from Escherichia coli (strain K12).